We begin with the raw amino-acid sequence, 175 residues long: Inosine/xanthosine triphosphatase (175 aa).

Substrate is bound at residue 8–13 (TTNPAK). Residues aspartate 38 and glutamate 68 each contribute to the Mg(2+) site. 68–69 (EA) contributes to the substrate binding site.

The protein belongs to the YjjX NTPase family. Homodimer. Mg(2+) serves as cofactor. It depends on Mn(2+) as a cofactor.

It catalyses the reaction XTP + H2O = XDP + phosphate + H(+). The enzyme catalyses ITP + H2O = IDP + phosphate + H(+). Phosphatase that hydrolyzes non-canonical purine nucleotides such as XTP and ITP to their respective diphosphate derivatives. Probably excludes non-canonical purines from DNA/RNA precursor pool, thus preventing their incorporation into DNA/RNA and avoiding chromosomal lesions. The protein is Inosine/xanthosine triphosphatase of Yersinia enterocolitica serotype O:8 / biotype 1B (strain NCTC 13174 / 8081).